The primary structure comprises 133 residues: Large-conductance mechanosensitive channel (133 aa).

The next 2 membrane-spanning stretches (helical) occupy residues 10–30 (FAMRGNVVDMAVGVIIGGAFG) and 76–96 (GAFIQTVFDFVIIAFAIFLMI).

It belongs to the MscL family. Homopentamer.

It is found in the cell inner membrane. In terms of biological role, channel that opens in response to stretch forces in the membrane lipid bilayer. May participate in the regulation of osmotic pressure changes within the cell. The polypeptide is Large-conductance mechanosensitive channel (Pasteurella multocida (strain Pm70)).